The following is a 294-amino-acid chain: Enoyl-CoA hydratase domain-containing protein 3, mitochondrial (294 aa).

The N-terminal 61 residues, 1–61, are a transit peptide targeting the mitochondrion; the sequence is MSWLRSCGER…IILNNPQQRN (61 aa).

Belongs to the enoyl-CoA hydratase/isomerase family.

The protein resides in the mitochondrion. In terms of biological role, may play a role in fatty acid biosynthesis and insulin sensitivity. The sequence is that of Enoyl-CoA hydratase domain-containing protein 3, mitochondrial (echdc3) from Xenopus laevis (African clawed frog).